The following is a 350-amino-acid chain: Phosphotriesterase-related protein (350 aa).

6 residues coordinate a divalent metal cation: His-22, His-24, Glu-169, His-201, His-230, and Asp-298.

The protein belongs to the metallo-dependent hydrolases superfamily. Phosphotriesterase family. It depends on a divalent metal cation as a cofactor.

This chain is Phosphotriesterase-related protein, found in Drosophila melanogaster (Fruit fly).